We begin with the raw amino-acid sequence, 665 residues long: Mitochondrial Rho GTPase 1 (665 aa).

Residues 1–634 lie on the Cytoplasmic side of the membrane; the sequence is MTNDVIRIVV…NQDPEEETNT (634 aa). The 175-residue stretch at 3–177 folds into the Miro 1 domain; the sequence is NDVIRIVVCG…FYLCQKAVMH (175 aa). GTP is bound by residues 12 to 19, 61 to 67, and 119 to 122; these read GDEGVGKS, DTQFSNS, and NVFD. EF-hand domains follow at residues 193-228 and 313-348; these read NAVA…CFGR and EGYR…TPGI. Positions 206, 208, 210, 212, 217, 326, 328, 330, and 337 each coordinate Ca(2+). A Miro 2 domain is found at 452–618; sequence RSVFNCFVLG…FIQLAEAAQQ (167 aa). Residues 461 to 468, 498 to 502, and 567 to 570 contribute to the GTP site; these read GSHMSGKT, EMTGG, and LKAD. Residues 635-655 traverse the membrane as a helical; Anchor for type IV membrane protein segment; it reads IMPFALAGGATVLLAAAVAWI. The Mitochondrial intermembrane portion of the chain corresponds to 656-665; the sequence is FKNVRVAGRE.

This sequence belongs to the mitochondrial Rho GTPase family.

It localises to the mitochondrion outer membrane. Functionally, mitochondrial GTPase involved in mitochondrial trafficking. Probably involved in control of anterograde transport of mitochondria and their subcellular distribution. This is Mitochondrial Rho GTPase 1 (GEM1) from Yarrowia lipolytica (strain CLIB 122 / E 150) (Yeast).